The following is a 220-amino-acid chain: Translation initiation factor 6 (220 aa).

It belongs to the eIF-6 family.

Its function is as follows. Binds to the 50S ribosomal subunit and prevents its association with the 30S ribosomal subunit to form the 70S initiation complex. This is Translation initiation factor 6 from Pyrobaculum arsenaticum (strain DSM 13514 / JCM 11321 / PZ6).